A 374-amino-acid chain; its full sequence is Glutamate 5-kinase (374 aa).

K17 contacts ATP. Residues S57, D144, and N156 each contribute to the substrate site. ATP-binding positions include 176–177 (SD) and 218–224 (TGGMVTK). In terms of domain architecture, PUA spans 280-358 (QGALVLDDGA…RELARELGPA (79 aa)).

Belongs to the glutamate 5-kinase family.

It localises to the cytoplasm. The catalysed reaction is L-glutamate + ATP = L-glutamyl 5-phosphate + ADP. Its pathway is amino-acid biosynthesis; L-proline biosynthesis; L-glutamate 5-semialdehyde from L-glutamate: step 1/2. In terms of biological role, catalyzes the transfer of a phosphate group to glutamate to form L-glutamate 5-phosphate. The chain is Glutamate 5-kinase from Streptomyces coelicolor (strain ATCC BAA-471 / A3(2) / M145).